The chain runs to 545 residues: Monocarboxylate transporter 8 (545 aa).

Positions 1–98 (MALPSPASEE…VETRGTARGF (98 aa)) are disordered. Ala2 is modified (N-acetylalanine). Residues 2–102 (ALPSPASEEA…GTARGFQPPE (101 aa)) are Cytoplasmic-facing. 2 repeat units span residues 29-50 (PVPE…PVPV) and 51-72 (PPPE…PLPV). The 2 X 22 AA approximate tandem repeats stretch occupies residues 29 to 72 (PVPEPEPEPEPEPEPEPEPVPVPPPEPQPEPEPQPLPDPAPLPV). The span at 33-45 (PEPEPEPEPEPEP) shows a compositional bias: acidic residues. The segment covering 46 to 70 (EPVPVPPPEPQPEPEPQPLPDPAPL) has biased composition (pro residues). A helical transmembrane segment spans residues 103–123 (GGFGWIVVFAATWCNGSIFGI). Topologically, residues 124–149 (HNSVGILYSMLLEEEKEKNRQVEFQA) are extracellular. The chain crosses the membrane as a helical span at residues 150 to 170 (AWVGALAMGMIFFCSPIVSIF). Topologically, residues 171–181 (TDRLGCRITAT) are cytoplasmic. A helical membrane pass occupies residues 182-202 (TGAAVAFIGLHTSSFTSSLSL). The Extracellular portion of the chain corresponds to 203-204 (RY). Residues 205 to 225 (FTYGILFGCGCSFAFQPSLVI) form a helical membrane-spanning segment. At 226-235 (LGHYFQRRLG) the chain is on the cytoplasmic side. A helical transmembrane segment spans residues 236–256 (LANGVVSAGSSIFSMSFPFLI). Topologically, residues 257–264 (KMLGDRIK) are extracellular. The chain crosses the membrane as a helical span at residues 265–285 (LAQTFQVLSTFMFVLTLLSLT). The Cytoplasmic segment spans residues 286–328 (YRPLLPSSQDTPSKRGAHTLRQRFLVQFRKYFNMRVFRQRTYR). Residues 329–349 (IWAFGIAAAALGYFVPYVHLM) form a helical membrane-spanning segment. Over 350-362 (KYVEDKFKEIKET) the chain is Extracellular. The chain crosses the membrane as a helical span at residues 363 to 383 (WVLLVCIGATSGLGRLVSGHI). Topologically, residues 384–392 (SDSIPGLKK) are cytoplasmic. Residues 393–413 (IYLQVLSFLLLGLMSMMIPLC) form a helical membrane-spanning segment. The Extracellular segment spans residues 414-415 (RD). The chain crosses the membrane as a helical span at residues 416–436 (FGGLIVVCLFLGLCDGFFITI). The Cytoplasmic portion of the chain corresponds to 437–453 (MAPIAFELVGPMQASQA). A helical transmembrane segment spans residues 454-474 (IGYLLGMMALPMIAGPPIAGL). The Extracellular portion of the chain corresponds to 475 to 483 (LRNCFGNYH). Residues 484–504 (VAFYFAGVPPIIGAVILFFVP) traverse the membrane as a helical segment. The Cytoplasmic portion of the chain corresponds to 505–545 (LMHQRMFKKEQRESSKDKMLSHDPDPNGELLPGSPTPEEPI). The span at 514 to 529 (EQRESSKDKMLSHDPD) shows a compositional bias: basic and acidic residues. The disordered stretch occupies residues 514–545 (EQRESSKDKMLSHDPDPNGELLPGSPTPEEPI). Thr540 bears the Phosphothreonine mark.

The protein belongs to the major facilitator superfamily. Monocarboxylate porter (TC 2.A.1.13) family. Monomer. Homodimer. Homooligomer. Expressed at highest levels in liver, lower levels in brain, kidney and heart (at protein level). Expressed in microvessels of the blood-brain barrier (BBB) (at protein level).

The protein resides in the cell membrane. Its subcellular location is the apical cell membrane. It carries out the reaction 3,3',5-triiodo-L-thyronine(out) = 3,3',5-triiodo-L-thyronine(in). It catalyses the reaction 3,3',5'-triiodo-L-thyronine(out) = 3,3',5'-triiodo-L-thyronine(in). The catalysed reaction is L-thyroxine(out) = L-thyroxine(in). The enzyme catalyses 3,3'-diiodo-L-thyronine(out) = 3,3'-diiodo-L-thyronine(in). Functionally, specific thyroid hormone transmembrane transporter, that mediates both uptake and efflux of thyroid hormone across the cell membrane independently of pH or a Na(+) gradient. Major substrates are the iodothyronines T3 and T4 and to a lesser extent rT3 and 3,3-diiodothyronine (3,3'-T2). Acts as an important mediator of thyroid hormone transport, especially T3, through the blood-brain barrier. In Rattus norvegicus (Rat), this protein is Monocarboxylate transporter 8 (SLC16A2).